A 538-amino-acid chain; its full sequence is Beta-1-syntrophin (538 aa).

Position 2 is an N-acetylalanine (Ala2). PH domains lie at 19–298 (RAQR…SNVN) and 322–433 (EIRH…QGCH). Phosphoserine is present on residues Ser87, Ser126, and Ser205. One can recognise a PDZ domain in the interval 112–195 (GVKVLKQELG…EVLLEVKYMR (84 aa)). The interval 205 to 237 (SPVSEIGWETPPPESPRLGGSTSDPPSSQSFSF) is disordered. The residue at position 214 (Thr214) is a Phosphothreonine. Phosphoserine occurs at positions 219, 232, 236, and 389. Positions 225–236 (STSDPPSSQSFS) are enriched in low complexity. The 57-residue stretch at 482 to 538 (PYEKLKMSSDDGIRMLYLDFGGKDGEIQLDLHSCPKPIVFIIHSFLSAKITRLGLVA) folds into the SU domain. Positions 518 to 538 (PIVFIIHSFLSAKITRLGLVA) are calmodulin-binding.

It belongs to the syntrophin family. As to quaternary structure, monomer and homodimer. Interacts with the other members of the syntrophin family SNTA1 and SNTB2; with the sodium channel proteins SCN4A and SCN5A. Interacts with the viral HTLV-1 TAX protein and with dystrophin protein DMD and related proteins DTNA and UTRN. Interacts with DTNB. Post-translationally, phosphorylated by CaM-kinase II. As to expression, ubiquitous.

It is found in the cell membrane. It localises to the sarcolemma. Its subcellular location is the cell junction. The protein resides in the cytoplasm. The protein localises to the cytoskeleton. Adapter protein that binds to and probably organizes the subcellular localization of a variety of membrane proteins. May link various receptors to the actin cytoskeleton and the dystrophin glycoprotein complex. The sequence is that of Beta-1-syntrophin (SNTB1) from Homo sapiens (Human).